The primary structure comprises 117 residues: Large ribosomal subunit protein bL20 (117 aa).

It belongs to the bacterial ribosomal protein bL20 family.

In terms of biological role, binds directly to 23S ribosomal RNA and is necessary for the in vitro assembly process of the 50S ribosomal subunit. It is not involved in the protein synthesizing functions of that subunit. The chain is Large ribosomal subunit protein bL20 from Mesomycoplasma hyopneumoniae (strain 232) (Mycoplasma hyopneumoniae).